The sequence spans 328 residues: Beta-agarase C (328 aa).

Residues 1–17 (MNLTKMAVFAASLFCLA) form the signal peptide. A propeptide spanning residues 18 to 67 (CKNDIDTELEKKSIPESEIQKSEEKLPNEEELTPTDPDEETNKEETVTAN) is cleaved from the precursor. Positions 26 to 45 (LEKKSIPESEIQKSEEKLPN) are enriched in basic and acidic residues. The segment at 26-61 (LEKKSIPESEIQKSEEKLPNEEELTPTDPDEETNKE) is disordered. Positions 46 to 59 (EEELTPTDPDEETN) are enriched in acidic residues. In terms of domain architecture, GH16 spans 70 to 328 (YDFTGNTPPP…WIHTYQLVEE (259 aa)). Substrate-binding positions include Trp110, 119–129 (KAENSGVSDGK), 133–135 (KAT), Glu188, Glu193, and Arg224. Residue Glu188 is the Nucleophile of the active site. Catalysis depends on Glu193, which acts as the Proton donor.

This sequence belongs to the glycosyl hydrolase 16 family.

It is found in the secreted. The enzyme catalyses Hydrolysis of (1-&gt;4)-beta-D-galactosidic linkages in agarose, giving the tetramer as the predominant product.. Its function is as follows. Cleaves the beta-1,4-linkages between beta-D-galactose and alpha-L-3,6-anhydro-galactose residues in agarose. Cleaves agarose in a random manner with retention of the anomeric-bond configuration, producing beta-anomers that give rise progressively to alpha-anomers when mutarotation takes place. The sequence is that of Beta-agarase C (agaC) from Zobellia galactanivorans (strain DSM 12802 / CCUG 47099 / CIP 106680 / NCIMB 13871 / Dsij).